A 66-amino-acid polypeptide reads, in one-letter code: Photosystem II reaction center protein H (66 aa).

The helical transmembrane segment at 27 to 47 (GAVPVMTVIGLLLLVFLVILL) threads the bilayer.

It belongs to the PsbH family. As to quaternary structure, PSII is composed of 1 copy each of membrane proteins PsbA, PsbB, PsbC, PsbD, PsbE, PsbF, PsbH, PsbI, PsbJ, PsbK, PsbL, PsbM, PsbT, PsbX, PsbY, Psb30/Ycf12, peripheral proteins PsbO, CyanoQ (PsbQ), PsbU, PsbV and a large number of cofactors. It forms dimeric complexes.

The protein localises to the cellular thylakoid membrane. In terms of biological role, one of the components of the core complex of photosystem II (PSII), required for its stability and/or assembly. PSII is a light-driven water:plastoquinone oxidoreductase that uses light energy to abstract electrons from H(2)O, generating O(2) and a proton gradient subsequently used for ATP formation. It consists of a core antenna complex that captures photons, and an electron transfer chain that converts photonic excitation into a charge separation. This chain is Photosystem II reaction center protein H, found in Prochlorococcus marinus (strain MIT 9215).